Consider the following 156-residue polypeptide: Rhombotin-1 (156 aa).

LIM zinc-binding domains are found at residues 22–84 (KGCA…LFGT) and 86–148 (GNCA…GQLN).

It localises to the nucleus. In terms of biological role, may be involved in gene regulation within neural lineage cells potentially by direct DNA binding or by binding to other transcription factors. In Xenopus laevis (African clawed frog), this protein is Rhombotin-1.